Reading from the N-terminus, the 388-residue chain is Chorismate synthase (388 aa).

Residues Arg-39 and Arg-45 each coordinate NADP(+). Residues 130-132 (RSS), 251-252 (NA), Gly-296, 311-315 (KPIPT), and Arg-337 each bind FMN.

The protein belongs to the chorismate synthase family. As to quaternary structure, homotetramer. FMNH2 is required as a cofactor.

The catalysed reaction is 5-O-(1-carboxyvinyl)-3-phosphoshikimate = chorismate + phosphate. Its pathway is metabolic intermediate biosynthesis; chorismate biosynthesis; chorismate from D-erythrose 4-phosphate and phosphoenolpyruvate: step 7/7. Functionally, catalyzes the anti-1,4-elimination of the C-3 phosphate and the C-6 proR hydrogen from 5-enolpyruvylshikimate-3-phosphate (EPSP) to yield chorismate, which is the branch point compound that serves as the starting substrate for the three terminal pathways of aromatic amino acid biosynthesis. This reaction introduces a second double bond into the aromatic ring system. In Streptococcus pyogenes serotype M28 (strain MGAS6180), this protein is Chorismate synthase.